We begin with the raw amino-acid sequence, 201 residues long: 3-isopropylmalate dehydratase small subunit (201 aa).

It belongs to the LeuD family. LeuD type 1 subfamily. Heterodimer of LeuC and LeuD.

The catalysed reaction is (2R,3S)-3-isopropylmalate = (2S)-2-isopropylmalate. It participates in amino-acid biosynthesis; L-leucine biosynthesis; L-leucine from 3-methyl-2-oxobutanoate: step 2/4. In terms of biological role, catalyzes the isomerization between 2-isopropylmalate and 3-isopropylmalate, via the formation of 2-isopropylmaleate. This chain is 3-isopropylmalate dehydratase small subunit, found in Shewanella denitrificans (strain OS217 / ATCC BAA-1090 / DSM 15013).